The following is a 515-amino-acid chain: 2-isopropylmalate synthase (515 aa).

Residues 5 to 268 (VIIFDTTLRD…VCGIDATQIV (264 aa)) enclose the Pyruvate carboxyltransferase domain. Mn(2+) is bound by residues Asp-14, His-202, His-204, and Asn-239. The segment at 394 to 515 (KFISLSQHSE…QAKLNAQMTP (122 aa)) is regulatory domain.

It belongs to the alpha-IPM synthase/homocitrate synthase family. LeuA type 1 subfamily. In terms of assembly, homodimer. Requires Mn(2+) as cofactor.

It localises to the cytoplasm. It catalyses the reaction 3-methyl-2-oxobutanoate + acetyl-CoA + H2O = (2S)-2-isopropylmalate + CoA + H(+). It participates in amino-acid biosynthesis; L-leucine biosynthesis; L-leucine from 3-methyl-2-oxobutanoate: step 1/4. Its function is as follows. Catalyzes the condensation of the acetyl group of acetyl-CoA with 3-methyl-2-oxobutanoate (2-ketoisovalerate) to form 3-carboxy-3-hydroxy-4-methylpentanoate (2-isopropylmalate). In Polynucleobacter necessarius subsp. necessarius (strain STIR1), this protein is 2-isopropylmalate synthase.